A 187-amino-acid chain; its full sequence is Probable cobalt-precorrin-6B C(15)-methyltransferase (decarboxylating) (187 aa).

Residues Thr-17, Gly-41–Gly-45, Asp-62, and Gly-91 contribute to the S-adenosyl-L-methionine site.

Belongs to the methyltransferase superfamily. Archaeal-type CbiT family.

The enzyme catalyses Co-precorrin-6B + S-adenosyl-L-methionine = Co-precorrin-7 + S-adenosyl-L-homocysteine + CO2. It participates in cofactor biosynthesis; adenosylcobalamin biosynthesis; cob(II)yrinate a,c-diamide from sirohydrochlorin (anaerobic route): step 8/10. In terms of biological role, catalyzes the methylation of C-15 in cobalt-precorrin-6B followed by the decarboxylation of C-12 to form cobalt-precorrin-7. In Methanobrevibacter smithii (strain ATCC 35061 / DSM 861 / OCM 144 / PS), this protein is Probable cobalt-precorrin-6B C(15)-methyltransferase (decarboxylating).